The chain runs to 196 residues: Pyridoxine/pyridoxamine 5'-phosphate oxidase (196 aa).

FMN-binding positions include 46 to 51, 61 to 62, Arg-67, Lys-68, and Gln-90; these read RNVLYK and FT. Residue Lys-51 coordinates substrate. The substrate site is built by Tyr-108, Arg-112, and Ser-116. Residues 125 to 126 and Trp-169 each bind FMN; that span reads QS. A substrate-binding site is contributed by 175 to 177; the sequence is RLH. Position 179 (Arg-179) interacts with FMN.

The protein belongs to the pyridoxamine 5'-phosphate oxidase family. Homodimer. FMN serves as cofactor.

The enzyme catalyses pyridoxamine 5'-phosphate + O2 + H2O = pyridoxal 5'-phosphate + H2O2 + NH4(+). The catalysed reaction is pyridoxine 5'-phosphate + O2 = pyridoxal 5'-phosphate + H2O2. It functions in the pathway cofactor metabolism; pyridoxal 5'-phosphate salvage; pyridoxal 5'-phosphate from pyridoxamine 5'-phosphate: step 1/1. The protein operates within cofactor metabolism; pyridoxal 5'-phosphate salvage; pyridoxal 5'-phosphate from pyridoxine 5'-phosphate: step 1/1. Its function is as follows. Catalyzes the oxidation of either pyridoxine 5'-phosphate (PNP) or pyridoxamine 5'-phosphate (PMP) into pyridoxal 5'-phosphate (PLP). This Coxiella burnetii (strain RSA 493 / Nine Mile phase I) protein is Pyridoxine/pyridoxamine 5'-phosphate oxidase.